The primary structure comprises 193 residues: ATP-dependent Clp protease proteolytic subunit (193 aa).

The Nucleophile role is filled by Ser98. His123 is a catalytic residue.

It belongs to the peptidase S14 family. Fourteen ClpP subunits assemble into 2 heptameric rings which stack back to back to give a disk-like structure with a central cavity, resembling the structure of eukaryotic proteasomes.

It is found in the cytoplasm. It carries out the reaction Hydrolysis of proteins to small peptides in the presence of ATP and magnesium. alpha-casein is the usual test substrate. In the absence of ATP, only oligopeptides shorter than five residues are hydrolyzed (such as succinyl-Leu-Tyr-|-NHMec, and Leu-Tyr-Leu-|-Tyr-Trp, in which cleavage of the -Tyr-|-Leu- and -Tyr-|-Trp bonds also occurs).. In terms of biological role, cleaves peptides in various proteins in a process that requires ATP hydrolysis. Has a chymotrypsin-like activity. Plays a major role in the degradation of misfolded proteins. The chain is ATP-dependent Clp protease proteolytic subunit from Lachnospira eligens (strain ATCC 27750 / DSM 3376 / VPI C15-48 / C15-B4) (Eubacterium eligens).